Consider the following 463-residue polypeptide: Phosphoglucosamine mutase (463 aa).

Serine 101 (phosphoserine intermediate) is an active-site residue. The Mg(2+) site is built by serine 101, aspartate 256, aspartate 258, and aspartate 260. Position 101 is a phosphoserine (serine 101).

It belongs to the phosphohexose mutase family. Mg(2+) is required as a cofactor. In terms of processing, activated by phosphorylation.

The catalysed reaction is alpha-D-glucosamine 1-phosphate = D-glucosamine 6-phosphate. In terms of biological role, catalyzes the conversion of glucosamine-6-phosphate to glucosamine-1-phosphate. This Desulforapulum autotrophicum (strain ATCC 43914 / DSM 3382 / VKM B-1955 / HRM2) (Desulfobacterium autotrophicum) protein is Phosphoglucosamine mutase.